Here is a 617-residue protein sequence, read N- to C-terminus: MHCKVSLLDDTVYECVVEKHAKGQDLLKRVCEHLNLLEEDYFGLAIWDNATSKTWLDSAKEIKKQVRGVPWNFTFNVKFYPPDPAQLTEDITRYYLCLQLRQDIVSGRLPCSFATLALLGSYTIQSELGDYDPELHGADYVSDFKLAPNQTKELEEKVMELHKSYRSMTPAQADLEFLENAKKLSMYGVDLHKAKDLEGVDIILGVCSSGLLVYKEKLRINRFPWPKVLKISYKRSSFFIKIRPGEQEQYESTIGFKLPSYRAAKKLWKVCVEHHTFFRLTSTDTIPKSKFLALGSKFRYSGRTQAQTRQASALIDRPAPHFERTASKRASRSLDGAAAVEPADRTPRPTSAPAIAPSPAAEGGVPGAPVKKAQKETVQVEVKQEEAPPEDAEPEPSEAWKKKRERLDGENIYIRHSNLMLEDLDKSQEEIKKHHASISELKKNFMESVPEPRPSEWDKRLSTHSPFRTLNINGQIPTGEGPPLVKTQTVTISDTANAVKSEIPTKDVPIVHTETKTITYEAAQTDDSNGDLDPGVLLTAQTITSETTSSTTTTQITKTVKGGISETRIEKRIVITGDADIDHDQVLVQAIKEAKEQHPDMSVTKVVVHQETEISEE.

Residues 1-282 (MHCKVSLLDD…EHHTFFRLTS (282 aa)) enclose the FERM domain. Tyrosine 13 is modified (phosphotyrosine). Residue threonine 169 is modified to Phosphothreonine. The interval 308 to 401 (TRQASALIDR…AEPEPSEAWK (94 aa)) is disordered. Phosphoserine occurs at positions 312, 331, and 333. The segment covering 348–361 (RPTSAPAIAPSPAA) has biased composition (low complexity). Residues 387–396 (APPEDAEPEP) are compositionally biased toward acidic residues. Residues 401–466 (KKKRERLDGE…WDKRLSTHSP (66 aa)) are spectrin--actin-binding. Tyrosine 413 carries the phosphotyrosine; by EGFR modification. 4 positions are modified to phosphoserine: serine 417, serine 427, serine 437, and serine 462. Serine 465 carries the post-translational modification Phosphoserine; by CDK1. The segment at 467-617 (FRTLNINGQI…VHQETEISEE (151 aa)) is C-terminal (CTD). A phosphothreonine mark is found at threonine 489 and threonine 612.

Binds with a high affinity to glycophorin and with lower affinity to band III protein. Associates with the nuclear mitotic apparatus. Binds calmodulin, CPAP and DLG1. Also found to associate with contractile apparatus and tight junctions. Interacts with NUMA1; this interaction is negatively regulated by CDK1 during metaphase and promotes anaphase-specific localization of NUMA1 in symmetrically dividing cells. Interacts with ATP2B1; regulates small intestinal calcium absorption through regulation of membrane expression of ATP2B1. In terms of processing, phosphorylated at multiple sites by different protein kinases and each phosphorylation event selectively modulates the protein's functions. Post-translationally, phosphorylation on Tyr-413 reduces the ability of 4.1 to promote the assembly of the spectrin/actin/4.1 ternary complex.

The protein resides in the nucleus. The protein localises to the cytoplasm. Its subcellular location is the cytoskeleton. It localises to the cell cortex. Its function is as follows. Protein 4.1 is a major structural element of the erythrocyte membrane skeleton. It plays a key role in regulating membrane physical properties of mechanical stability and deformability by stabilizing spectrin-actin interaction. Recruits DLG1 to membranes. Required for dynein-dynactin complex and NUMA1 recruitment at the mitotic cell cortex during anaphase. The polypeptide is Protein 4.1 (Bos taurus (Bovine)).